A 367-amino-acid polypeptide reads, in one-letter code: Flagellar P-ring protein (367 aa).

An N-terminal signal peptide occupies residues 1–21; that stretch reads MKIIQTFFIITLLWLSQGVQA.

This sequence belongs to the FlgI family. The basal body constitutes a major portion of the flagellar organelle and consists of four rings (L,P,S, and M) mounted on a central rod.

The protein localises to the periplasm. Its subcellular location is the bacterial flagellum basal body. Assembles around the rod to form the L-ring and probably protects the motor/basal body from shearing forces during rotation. This Nitrosococcus oceani (strain ATCC 19707 / BCRC 17464 / JCM 30415 / NCIMB 11848 / C-107) protein is Flagellar P-ring protein.